The chain runs to 393 residues: Ig gamma-1 chain C region, membrane-bound form (393 aa).

Positions 1–97 are CH1; that stretch reads AKTTPPSVYP…ASSTKVDKKI (97 aa). Cysteines 27 and 82 form a disulfide. A hinge region spans residues 98–110; sequence VPRDCGCKPCICT. The CH2 stretch occupies residues 111 to 217; sequence VPEVSSVFIF…PIEKTISKTK (107 aa). Disulfide bonds link Cys-138/Cys-198 and Cys-244/Cys-302. Asn-174 is a glycosylation site (N-linked (GlcNAc...) asparagine). Residues 218-324 are CH3; it reads GRPKAPQVYT…EKSLSHSPGL (107 aa). The helical transmembrane segment at 340–357 threads the bilayer; that stretch reads GLWTTITIFISLFLLSVC. The Cytoplasmic portion of the chain corresponds to 358–393; that stretch reads YSAAVTLFKVKWIFSSVVELKQTLVPEYKNMIGQAP.

It localises to the cell membrane. The protein is Ig gamma-1 chain C region, membrane-bound form (Ighg1) of Mus musculus (Mouse).